A 276-amino-acid polypeptide reads, in one-letter code: Formamidopyrimidine-DNA glycosylase (276 aa).

The active-site Schiff-base intermediate with DNA is the P2. Catalysis depends on E3, which acts as the Proton donor. Catalysis depends on K58, which acts as the Proton donor; for beta-elimination activity. DNA is bound by residues H92, R111, and R154. Residues 239–273 form an FPG-type zinc finger; the sequence is HAYQRTGDPCERCGTPIQRIVVGQRGTHFCPKCQV. The active-site Proton donor; for delta-elimination activity is the R263.

This sequence belongs to the FPG family. As to quaternary structure, monomer. Zn(2+) serves as cofactor.

The catalysed reaction is Hydrolysis of DNA containing ring-opened 7-methylguanine residues, releasing 2,6-diamino-4-hydroxy-5-(N-methyl)formamidopyrimidine.. It catalyses the reaction 2'-deoxyribonucleotide-(2'-deoxyribose 5'-phosphate)-2'-deoxyribonucleotide-DNA = a 3'-end 2'-deoxyribonucleotide-(2,3-dehydro-2,3-deoxyribose 5'-phosphate)-DNA + a 5'-end 5'-phospho-2'-deoxyribonucleoside-DNA + H(+). In terms of biological role, involved in base excision repair of DNA damaged by oxidation or by mutagenic agents. Acts as a DNA glycosylase that recognizes and removes damaged bases. Has a preference for oxidized purines, such as 7,8-dihydro-8-oxoguanine (8-oxoG). Has AP (apurinic/apyrimidinic) lyase activity and introduces nicks in the DNA strand. Cleaves the DNA backbone by beta-delta elimination to generate a single-strand break at the site of the removed base with both 3'- and 5'-phosphates. The sequence is that of Formamidopyrimidine-DNA glycosylase from Ligilactobacillus salivarius (strain UCC118) (Lactobacillus salivarius).